Reading from the N-terminus, the 192-residue chain is Imidazoleglycerol-phosphate dehydratase (192 aa).

The protein belongs to the imidazoleglycerol-phosphate dehydratase family.

Its subcellular location is the cytoplasm. The enzyme catalyses D-erythro-1-(imidazol-4-yl)glycerol 3-phosphate = 3-(imidazol-4-yl)-2-oxopropyl phosphate + H2O. The protein operates within amino-acid biosynthesis; L-histidine biosynthesis; L-histidine from 5-phospho-alpha-D-ribose 1-diphosphate: step 6/9. The protein is Imidazoleglycerol-phosphate dehydratase of Staphylococcus epidermidis (strain ATCC 35984 / DSM 28319 / BCRC 17069 / CCUG 31568 / BM 3577 / RP62A).